The sequence spans 397 residues: Cell division protein DivIB (397 aa).

At 1–138 (MTTKDKGDQK…RIERIHLYRA (138 aa)) the chain is on the cytoplasmic side. A compositionally biased stretch (basic and acidic residues) spans 24-37 (QEYLEKKSQEKASE). The segment at 24 to 115 (QEYLEKKSQE…DRTEKFIGQA (92 aa)) is disordered. The segment covering 74 to 103 (ASDDDETNESEESEDVEEPEEENIEESSDV) has biased composition (acidic residues). A helical membrane pass occupies residues 139 to 159 (LPVLVISSLLILLSLYFITPL). A POTRA domain is found at 160 to 231 (GSLKNLVVTG…ITFKIQVTEY (72 aa)). The Extracellular segment spans residues 160–397 (GSLKNLVVTG…PSDVTDETNN (238 aa)). Residues 360 to 397 (LVQKEEQDQEQEKEESSEETVPGETEAAPSDVTDETNN) are disordered. Residues 366 to 377 (QDQEQEKEESSE) are compositionally biased toward acidic residues.

It belongs to the FtsQ/DivIB family. DivIB subfamily.

Its subcellular location is the cell membrane. Functionally, cell division protein that may be involved in stabilizing or promoting the assembly of the division complex. This chain is Cell division protein DivIB, found in Streptococcus gordonii (strain Challis / ATCC 35105 / BCRC 15272 / CH1 / DL1 / V288).